The sequence spans 129 residues: Small ribosomal subunit protein uS12 (129 aa).

Asp89 carries the 3-methylthioaspartic acid modification.

It belongs to the universal ribosomal protein uS12 family. As to quaternary structure, part of the 30S ribosomal subunit. Contacts proteins S8 and S17. May interact with IF1 in the 30S initiation complex.

In terms of biological role, with S4 and S5 plays an important role in translational accuracy. Its function is as follows. Interacts with and stabilizes bases of the 16S rRNA that are involved in tRNA selection in the A site and with the mRNA backbone. Located at the interface of the 30S and 50S subunits, it traverses the body of the 30S subunit contacting proteins on the other side and probably holding the rRNA structure together. The combined cluster of proteins S8, S12 and S17 appears to hold together the shoulder and platform of the 30S subunit. This is Small ribosomal subunit protein uS12 from Rickettsia akari (strain Hartford).